Reading from the N-terminus, the 463-residue chain is uncharacterized protein (463 aa).

Positions 1-23 (MKFSSIPIASTLLSLLVASSVTA) are cleaved as a signal peptide. 2 disordered regions span residues 174-200 (STYN…TKAS) and 239-258 (GAST…QRKN).

The protein belongs to the but2 family.

Its subcellular location is the cytoplasm. This is an uncharacterized protein from Schizosaccharomyces pombe (strain 972 / ATCC 24843) (Fission yeast).